Reading from the N-terminus, the 75-residue chain is Large ribosomal subunit protein bL31 (75 aa).

In terms of assembly, part of the 50S ribosomal subunit.

In terms of biological role, binds the 23S rRNA. The polypeptide is Large ribosomal subunit protein bL31 (Rhodopseudomonas palustris (strain ATCC BAA-98 / CGA009)).